Here is a 487-residue protein sequence, read N- to C-terminus: MKALDELIFDNRFARLGDAFSTSVLSEPIETPRLVVASQSALALLDLAPEQADLPLFAEIFSGHKLWSEAEPRAMVYSGHQFGSYNPRLGDGRGLLLGEAYNDAGEHWDLHLKGAGRTPYSRMGDGRAVLRSSIREFLASEALHALGIPSSRAGCVVSSSTPVWRETQEHAAMVLRLAQSHVRFGSLEYFFYTKQPEQLKTLAEHVLTMHYPHCQEQPEPYLAMFREIVERNAELIAKWQAYGFCHGVMNTDNMSILGITFDFGPFAFLDDFDEHFICNHSDHEGRYSFSNQVPIAQWNLSALAQALTPFISVEALRETIGLFLPLYQAHYLDLMRRRLGLTIAQEQDEQLVSQLLKLMQNSGVDYTLFFRRLGDQPAAEALRTLRDDFVDIKGFDGWAEAYLARIAGEGKGTEQERQTRMHAVNPLYILRNYLAQNAIAAAEKGDYAEVRRLHQVLCTPFTEQPGMEGYAQRPPDWGKHLEISCSS.

8 residues coordinate ATP: G90, G92, R93, K113, D125, G126, R176, and R183. Catalysis depends on D252, which acts as the Proton acceptor. Mg(2+) contacts are provided by N253 and D262. D262 is an ATP binding site.

The protein belongs to the SELO family. Mg(2+) is required as a cofactor. It depends on Mn(2+) as a cofactor.

The enzyme catalyses L-seryl-[protein] + ATP = 3-O-(5'-adenylyl)-L-seryl-[protein] + diphosphate. It carries out the reaction L-threonyl-[protein] + ATP = 3-O-(5'-adenylyl)-L-threonyl-[protein] + diphosphate. It catalyses the reaction L-tyrosyl-[protein] + ATP = O-(5'-adenylyl)-L-tyrosyl-[protein] + diphosphate. The catalysed reaction is L-histidyl-[protein] + UTP = N(tele)-(5'-uridylyl)-L-histidyl-[protein] + diphosphate. The enzyme catalyses L-seryl-[protein] + UTP = O-(5'-uridylyl)-L-seryl-[protein] + diphosphate. It carries out the reaction L-tyrosyl-[protein] + UTP = O-(5'-uridylyl)-L-tyrosyl-[protein] + diphosphate. In terms of biological role, nucleotidyltransferase involved in the post-translational modification of proteins. It can catalyze the addition of adenosine monophosphate (AMP) or uridine monophosphate (UMP) to a protein, resulting in modifications known as AMPylation and UMPylation. In Pseudomonas savastanoi pv. phaseolicola (strain 1448A / Race 6) (Pseudomonas syringae pv. phaseolicola (strain 1448A / Race 6)), this protein is Protein nucleotidyltransferase YdiU.